The primary structure comprises 327 residues: MSPATVTIDTTPDFSNGGAPHSTLLLAPPAMAAQQDAMAAALTDAAPLGSRPELYMLDRLAAGLTNLAPAAYDLVLVLASGADPLLSRRDVFAKIADAMKPGAKLRSRDGSPLDAAIAKEAILAGLVESAEGAYEKPAEEVAAVPLKFLKKKNKGEGGGPVQSPAAATQPTAPAPAAAAKSLPNGVVMVDLNDDFDVSDDEMIDEDELMTEEDLMRPIQQPPECAPKPGKKRRACKDCTCGLAERLEAQDKARRDKADKQLQEKAATPFKLASEDLNELDFTVQGKTGSCGSCALGDAFRCADCPYIGLPAFKPGEEVTILNNVAQL.

Polar residues predominate over residues 1–14; sequence MSPATVTIDTTPDF. 2 disordered regions span residues 1-20 and 153-179; these read MSPATVTIDTTPDFSNGGAP and NKGEGGGPVQSPAAATQPTAPAPAAAA. An N-terminal SAM-like domain region spans residues 17–144; it reads GGAPHSTLLL…EKPAEEVAAV (128 aa). The interval 145-214 is linker; sequence PLKFLKKKNK…EDELMTEEDL (70 aa). A compositionally biased stretch (low complexity) spans 164 to 179; the sequence is PAAATQPTAPAPAAAA. The [2Fe-2S] cluster site is built by cysteine 224, cysteine 235, cysteine 238, and cysteine 240. Positions 224–240 are fe-S binding site A; the sequence is CAPKPGKKRRACKDCTC. [4Fe-4S] cluster-binding residues include cysteine 290, cysteine 293, cysteine 301, and cysteine 304. 2 consecutive short sequence motifs (cx2C motif) follow at residues 290-293 and 301-304; these read CGSC and CADC. The interval 290 to 304 is fe-S binding site B; that stretch reads CGSCALGDAFRCADC.

The protein belongs to the anamorsin family. In terms of assembly, monomer. Interacts with TAH18. Interacts with MIA40. [2Fe-2S] cluster is required as a cofactor. Requires [4Fe-4S] cluster as cofactor.

The protein resides in the cytoplasm. It localises to the mitochondrion intermembrane space. Component of the cytosolic iron-sulfur (Fe-S) protein assembly (CIA) machinery required for the maturation of extramitochondrial Fe-S proteins. Part of an electron transfer chain functioning in an early step of cytosolic Fe-S biogenesis, facilitating the de novo assembly of a [4Fe-4S] cluster on the scaffold complex CFD1-NBP35. Electrons are transferred to DRE2 from NADPH via the FAD- and FMN-containing protein TAH18. TAH18-DRE2 are also required for the assembly of the diferric tyrosyl radical cofactor of ribonucleotide reductase (RNR), probably by providing electrons for reduction during radical cofactor maturation in the catalytic small subunit RNR2. This is Fe-S cluster assembly protein DRE2 from Pyricularia oryzae (strain 70-15 / ATCC MYA-4617 / FGSC 8958) (Rice blast fungus).